An 803-amino-acid polypeptide reads, in one-letter code: Ribonuclease II, chloroplastic/mitochondrial (803 aa).

The transit peptide at 1 to 35 (MMSVRAINGCSIIRTATSAGGPPVSLFRHRIQRLR) directs the protein to the chloroplast and mitochondrion. One can recognise an RNB domain in the interval 399–694 (RIDLTHLKVY…AHYQIKAFLR (296 aa)).

This sequence belongs to the RNR ribonuclease family. In terms of tissue distribution, expressed in seedlings, roots, leaves and flowers.

The protein localises to the mitochondrion. The protein resides in the plastid. It localises to the chloroplast. It carries out the reaction Exonucleolytic cleavage in the 3'- to 5'-direction to yield nucleoside 5'-phosphates.. Its function is as follows. 3'-5' exoribonuclease that catalyzes 3' maturation of chloroplast and mitochondrion ribosomal RNAs; degrades short nucleotidic extensions to generate the mature 3'-ends. Involved in the maturation of 23S, 16S and 5S rRNAs. This is Ribonuclease II, chloroplastic/mitochondrial (RNR1) from Arabidopsis thaliana (Mouse-ear cress).